A 484-amino-acid polypeptide reads, in one-letter code: Nuclear rim protein 1 (484 aa).

A Phosphoserine modification is found at Ser3. The next 2 membrane-spanning stretches (helical) occupy residues 145 to 165 (FTIF…MFGY) and 237 to 257 (IPTN…IVFL). The interval 416 to 457 (SSNENLEKGGAFLPNQDQNRPSKSLSPLRKTPLSARQKRFEG) is disordered. The residue at position 417 (Ser417) is a Phosphoserine. Polar residues predominate over residues 430–440 (NQDQNRPSKSL). Ser474 bears the Phosphoserine mark.

The protein belongs to the NUR1 family. As to quaternary structure, interacts with CSM1.

Its subcellular location is the nucleus membrane. Its function is as follows. Member of a perinuclear network that controls recombination at multiple loci to maintain genome stability. Required for rDNA repeat stability. The chain is Nuclear rim protein 1 (NUR1) from Saccharomyces cerevisiae (strain JAY291) (Baker's yeast).